The chain runs to 424 residues: CinA-like protein (424 aa).

It belongs to the CinA family.

In Syntrophobacter fumaroxidans (strain DSM 10017 / MPOB), this protein is CinA-like protein.